The chain runs to 371 residues: MSKQSPTRKLRQTVYDASLKVMFTLRPERIHGLMNKALGVVDGVAPLNRTMEKIIAVHDDSLSQEVFGVTFPRPLGLAAGFDKNASMADAWGAVGFGYAELGTVTASPQPGNPTPRLFRLPADKAILNRMGFNNLGAAEVATNLSNRKSTDVIGINIGKTKVVPAEHAVDDYRRSASLLGDLADYLVVNVSSPNTPGLRDLQAVESLRPILAAVQESTTVPVLVKIAPDLSDEDIDAVADLAVELKLAGIVATNTTISREGLNTPAGEVEAMGAGGISGAPVAARSLEVLKRLYARVGKEMVLISVGGISTPEQAWERITSGATLLQGYTPFIYGGPDWIRDIHLGIAKQLKAHGLRNIADAVGSELEWKN.

FMN is bound by residues Ala79 to Lys83 and Thr103. Lys83 is a binding site for substrate. Residue Asn128–Phe132 participates in substrate binding. FMN contacts are provided by Asn156 and Asn189. Asn189 contacts substrate. The active-site Nucleophile is Ser192. Asn194 serves as a coordination point for substrate. FMN contacts are provided by Lys225 and Thr253. Asn254 to Thr255 contributes to the substrate binding site. FMN-binding positions include Gly279, Gly308, and Tyr329–Thr330.

Belongs to the dihydroorotate dehydrogenase family. Type 2 subfamily. In terms of assembly, monomer. FMN serves as cofactor.

It localises to the cell membrane. The catalysed reaction is (S)-dihydroorotate + a quinone = orotate + a quinol. It participates in pyrimidine metabolism; UMP biosynthesis via de novo pathway; orotate from (S)-dihydroorotate (quinone route): step 1/1. In terms of biological role, catalyzes the conversion of dihydroorotate to orotate with quinone as electron acceptor. The protein is Dihydroorotate dehydrogenase (quinone) of Corynebacterium glutamicum (strain R).